The following is a 131-amino-acid chain: Large-conductance mechanosensitive channel (131 aa).

The next 3 membrane-spanning stretches (helical) occupy residues 8–28 (FAMR…GAFG), 30–50 (IVSS…LGGV), and 67–87 (GMFI…FVFV).

Belongs to the MscL family. Homopentamer.

The protein localises to the cell membrane. Channel that opens in response to stretch forces in the membrane lipid bilayer. May participate in the regulation of osmotic pressure changes within the cell. This is Large-conductance mechanosensitive channel from Geobacillus sp. (strain WCH70).